Consider the following 502-residue polypeptide: Calnexin homolog (502 aa).

Positions 1 to 19 (MKFSAYLWWLFLNLALVKG) are cleaved as a signal peptide. Topologically, residues 20–481 (TSLLSNVTLA…IDRILEQPLK (462 aa)) are lumenal. N-linked (GlcNAc...) asparagine glycans are attached at residues Asn-25 and Asn-104. The cysteines at positions 125 and 161 are disulfide-linked. An alpha-D-glucoside contacts are provided by Lys-131 and Asp-159. The segment at 248–381 (IPDVSVAKPH…PEIENPLYYE (134 aa)) is p domain (Extended arm). A run of 5 repeats spans residues 250 to 261 (DVSVAKPHDWDD), 267 to 278 (DPEAVKLSDRDE), 286 to 297 (HPDGTEPPEWNS), 305 to 316 (DPNAQKPSWWKE), and 320 to 330 (GEWIPPMIKNP). 2 4 X approximate repeats regions span residues 250 to 316 (DVSV…WWKE) and 320 to 377 (GEWI…IENP). Asn-296 carries N-linked (GlcNAc...) asparagine glycosylation. Cys-332 and Cys-338 are oxidised to a cystine. Tandem repeats lie at residues 339–349 (GQQIPGLINNA), 353–363 (GPGELNEIINP), and 367–377 (GEWHPPEIENP). Residue Glu-398 coordinates an alpha-D-glucoside. N-linked (GlcNAc...) asparagine glycosylation is found at Asn-416 and Asn-425. A helical transmembrane segment spans residues 482 to 502 (FVLTAAVVLLTTSVLCCVVFT).

The protein belongs to the calreticulin family. Interacts with MPD1.

The protein localises to the endoplasmic reticulum membrane. In terms of biological role, interacts with newly synthesized monoglucosylated glycoproteins in the endoplasmic reticulum. It may act in assisting protein assembly and/or in the retention within the ER of unassembled protein subunits. It seems to play a major role in the quality control apparatus of the ER by the retention of incorrectly folded proteins. This is Calnexin homolog (CNE1) from Saccharomyces cerevisiae (strain ATCC 204508 / S288c) (Baker's yeast).